The chain runs to 115 residues: Large ribosomal subunit protein P2 (115 aa).

M1 carries the post-translational modification N-acetylmethionine. Phosphoserine occurs at positions 17 and 19. K21 bears the N6-acetyllysine; alternate mark. An N6-succinyllysine; alternate modification is found at K21. Residues 78–90 (GSAAPAAGSAPAA) show a composition bias toward low complexity. Residues 78 to 115 (GSAAPAAGSAPAAAEEKKDEKKEESEESDDDMGFGLFD) are disordered. Residues S79 and S86 each carry the phosphoserine modification. Positions 91 to 101 (AEEKKDEKKEE) are enriched in basic and acidic residues. A phosphoserine mark is found at S102 and S105.

It belongs to the eukaryotic ribosomal protein P1/P2 family. As to quaternary structure, heterodimer with P1 at the lateral ribosomal stalk of the large ribosomal subunit.

Functionally, plays an important role in the elongation step of protein synthesis. This chain is Large ribosomal subunit protein P2 (RPLP2), found in Homo sapiens (Human).